We begin with the raw amino-acid sequence, 200 residues long: LexA repressor (200 aa).

A DNA-binding region (H-T-H motif) is located at residues arginine 28–lysine 48. Catalysis depends on for autocatalytic cleavage activity residues serine 121 and lysine 158.

The protein belongs to the peptidase S24 family. Homodimer.

The enzyme catalyses Hydrolysis of Ala-|-Gly bond in repressor LexA.. Represses a number of genes involved in the response to DNA damage (SOS response), including recA and lexA. In the presence of single-stranded DNA, RecA interacts with LexA causing an autocatalytic cleavage which disrupts the DNA-binding part of LexA, leading to derepression of the SOS regulon and eventually DNA repair. This chain is LexA repressor, found in Hahella chejuensis (strain KCTC 2396).